We begin with the raw amino-acid sequence, 285 residues long: NAD kinase (285 aa).

Aspartate 68 serves as the catalytic Proton acceptor. NAD(+) is bound by residues 68–69, 142–143, arginine 153, lysine 170, aspartate 172, and glutamine 242; these read DG and ND.

Belongs to the NAD kinase family. Requires a divalent metal cation as cofactor.

The protein resides in the cytoplasm. The catalysed reaction is NAD(+) + ATP = ADP + NADP(+) + H(+). In terms of biological role, involved in the regulation of the intracellular balance of NAD and NADP, and is a key enzyme in the biosynthesis of NADP. Catalyzes specifically the phosphorylation on 2'-hydroxyl of the adenosine moiety of NAD to yield NADP. This Koribacter versatilis (strain Ellin345) protein is NAD kinase.